Here is a 402-residue protein sequence, read N- to C-terminus: Multidrug resistance protein MdtH (402 aa).

The next 11 helical transmembrane spans lie at 13 to 33 (YFLL…FPLI), 45 to 65 (ALMV…LGIF), 99 to 116 (PWLL…GTLF), 139 to 159 (LLMM…SWLL), 165 to 185 (LVCA…AWLL), 214 to 234 (VLTL…LPIM), 244 to 264 (AVKW…YPIA), 277 to 297 (LMAG…VGNL), 300 to 322 (LFTL…ETLS), 340 to 360 (LGLA…FDMG), and 368 to 388 (LPWM…GWQF).

Belongs to the major facilitator superfamily. DHA1 family. MdtH (TC 2.A.1.2.21) subfamily.

The protein resides in the cell inner membrane. The chain is Multidrug resistance protein MdtH from Citrobacter koseri (strain ATCC BAA-895 / CDC 4225-83 / SGSC4696).